Here is a 960-residue protein sequence, read N- to C-terminus: Valine--tRNA ligase (960 aa).

Residues 42–52 (PNITGNLHMGH) carry the 'HIGH' region motif. Residues 553–557 (KMSKS) carry the 'KMSKS' region motif. Lys-556 contributes to the ATP binding site. Positions 879 to 950 (VLKAIDKEIE…LSQQLESLHD (72 aa)) form a coiled coil.

It belongs to the class-I aminoacyl-tRNA synthetase family. ValS type 1 subfamily. As to quaternary structure, monomer.

It is found in the cytoplasm. It carries out the reaction tRNA(Val) + L-valine + ATP = L-valyl-tRNA(Val) + AMP + diphosphate. Its function is as follows. Catalyzes the attachment of valine to tRNA(Val). As ValRS can inadvertently accommodate and process structurally similar amino acids such as threonine, to avoid such errors, it has a 'posttransfer' editing activity that hydrolyzes mischarged Thr-tRNA(Val) in a tRNA-dependent manner. This Buchnera aphidicola subsp. Schizaphis graminum (strain Sg) protein is Valine--tRNA ligase.